The primary structure comprises 459 residues: Putrescine aminotransferase (459 aa).

Pyridoxal 5'-phosphate is bound by residues 150–151 (GT) and Gln274. Residue Lys300 is modified to N6-(pyridoxal phosphate)lysine. Thr332 lines the pyridoxal 5'-phosphate pocket.

The protein belongs to the class-III pyridoxal-phosphate-dependent aminotransferase family. Putrescine aminotransferase subfamily. Pyridoxal 5'-phosphate is required as a cofactor.

The enzyme catalyses an alkane-alpha,omega-diamine + 2-oxoglutarate = an omega-aminoaldehyde + L-glutamate. The catalysed reaction is putrescine + 2-oxoglutarate = 1-pyrroline + L-glutamate + H2O. It catalyses the reaction cadaverine + 2-oxoglutarate = 5-aminopentanal + L-glutamate. The protein operates within amine and polyamine degradation; putrescine degradation; 4-aminobutanal from putrescine (transaminase route): step 1/1. Functionally, catalyzes the aminotransferase reaction from putrescine to 2-oxoglutarate, leading to glutamate and 4-aminobutanal, which spontaneously cyclizes to form 1-pyrroline. This is the first step in one of two pathways for putrescine degradation, where putrescine is converted into 4-aminobutanoate (gamma-aminobutyrate or GABA) via 4-aminobutanal. Also functions as a cadaverine transaminase in a a L-lysine degradation pathway to succinate that proceeds via cadaverine, glutarate and L-2-hydroxyglutarate. In Enterobacter sp. (strain 638), this protein is Putrescine aminotransferase.